The following is a 476-amino-acid chain: Inactive glucose-1-phosphate adenylyltransferase small subunit 2, chloroplastic (476 aa).

A chloroplast-targeting transit peptide spans 1–55 (MQISSSSFITKFTNLHMVRSTSDHHQWRHNYNLKQLFIPNLSVSNSQHLPLNQSV).

The protein belongs to the bacterial/plant glucose-1-phosphate adenylyltransferase family. In terms of assembly, heterotetramer. In terms of tissue distribution, expressed at very low levels in leaves, inflorescences, fruits, and roots.

It is found in the plastid. It localises to the chloroplast. This chain is Inactive glucose-1-phosphate adenylyltransferase small subunit 2, chloroplastic, found in Arabidopsis thaliana (Mouse-ear cress).